Here is a 441-residue protein sequence, read N- to C-terminus: Ubiquitin carboxyl-terminal hydrolase MINDY-3 (441 aa).

Cys51 acts as the Nucleophile in catalysis. The active-site Proton acceptor is the His284.

The protein belongs to the MINDY deubiquitinase family. FAM188 subfamily.

It localises to the nucleus. It catalyses the reaction Thiol-dependent hydrolysis of ester, thioester, amide, peptide and isopeptide bonds formed by the C-terminal Gly of ubiquitin (a 76-residue protein attached to proteins as an intracellular targeting signal).. Functionally, hydrolase that can remove 'Lys-48'-linked conjugated ubiquitin from proteins. The protein is Ubiquitin carboxyl-terminal hydrolase MINDY-3 (mindy3) of Xenopus tropicalis (Western clawed frog).